An 862-amino-acid polypeptide reads, in one-letter code: Genome polyprotein (862 aa).

Gly2 is lipidated: N-myristoyl glycine; by host.

It belongs to the picornaviruses polyprotein family. Interacts with capsid protein VP1 and capsid protein VP3 to form heterotrimeric protomers. As to quaternary structure, interacts with capsid protein VP0, and capsid protein VP3 to form heterotrimeric protomers. Five protomers subsequently associate to form pentamers which serve as building blocks for the capsid. Interacts with capsid protein VP2, capsid protein VP3 and capsid protein VP4 following cleavage of capsid protein VP0. In terms of assembly, interacts with capsid protein VP1 and capsid protein VP3 in the mature capsid. Interacts with capsid protein VP0 and capsid protein VP1 to form heterotrimeric protomers. Five protomers subsequently associate to form pentamers which serve as building blocks for the capsid. Interacts with capsid protein VP4 in the mature capsid. Interacts with protein 2C; this interaction may be important for virion morphogenesis. As to quaternary structure, interacts with capsid protein VP1 and capsid protein VP3. Post-translationally, specific enzymatic cleavages in vivo by the viral proteases yield processing intermediates and the mature proteins. In terms of processing, myristoylation is required for the formation of pentamers during virus assembly. Further assembly of 12 pentamers and a molecule of genomic RNA generates the provirion. During virion maturation, immature virions are rendered infectious following cleavage of VP0 into VP4 and VP2. This maturation seems to be an autocatalytic event triggered by the presence of RNA in the capsid and it is followed by a conformational change infectious virion. Post-translationally, myristoylation is required during RNA encapsidation and formation of the mature virus particle.

Its subcellular location is the virion. It localises to the host cytoplasm. Functionally, forms an icosahedral capsid of pseudo T=3 symmetry with capsid proteins VP2 and VP3. The capsid is 300 Angstroms in diameter, composed of 60 copies of each capsid protein and enclosing the viral positive strand RNA genome. Capsid protein VP1 mainly forms the vertices of the capsid. Capsid protein VP1 interacts with host cell receptor to provide virion attachment to target host cells. This attachment induces virion internalization. Tyrosine kinases are probably involved in the entry process. After binding to its receptor, the capsid undergoes conformational changes. Capsid protein VP1 N-terminus (that contains an amphipathic alpha-helix) and capsid protein VP4 are externalized. Together, they shape a pore in the host membrane through which viral genome is translocated to host cell cytoplasm. Its function is as follows. Forms an icosahedral capsid of pseudo T=3 symmetry with capsid proteins VP2 and VP3. The capsid is 300 Angstroms in diameter, composed of 60 copies of each capsid protein and enclosing the viral positive strand RNA genome. In terms of biological role, lies on the inner surface of the capsid shell. After binding to the host receptor, the capsid undergoes conformational changes. Capsid protein VP4 is released, Capsid protein VP1 N-terminus is externalized, and together, they shape a pore in the host membrane through which the viral genome is translocated into the host cell cytoplasm. Component of immature procapsids, which is cleaved into capsid proteins VP4 and VP2 after maturation. Allows the capsid to remain inactive before the maturation step. The polypeptide is Genome polyprotein (Echovirus 16 (strain Harrington)).